The following is a 203-amino-acid chain: Glycerol-3-phosphate acyltransferase (203 aa).

5 helical membrane-spanning segments follow: residues 4 to 24 (IAYL…AVIF), 56 to 76 (LGVL…GFYL), 80 to 100 (ISVI…PVFF), 115 to 135 (IIPM…FVFL), and 149 to 169 (LIVP…VALV).

The protein belongs to the PlsY family. As to quaternary structure, probably interacts with PlsX.

The protein resides in the cell inner membrane. The catalysed reaction is an acyl phosphate + sn-glycerol 3-phosphate = a 1-acyl-sn-glycero-3-phosphate + phosphate. It participates in lipid metabolism; phospholipid metabolism. Catalyzes the transfer of an acyl group from acyl-phosphate (acyl-PO(4)) to glycerol-3-phosphate (G3P) to form lysophosphatidic acid (LPA). This enzyme utilizes acyl-phosphate as fatty acyl donor, but not acyl-CoA or acyl-ACP. This chain is Glycerol-3-phosphate acyltransferase, found in Glaesserella parasuis serovar 5 (strain SH0165) (Haemophilus parasuis).